We begin with the raw amino-acid sequence, 390 residues long: Aspartate carbamoyltransferase, chloroplastic (390 aa).

The transit peptide at 1–68 directs the protein to the chloroplast; it reads MSIASSLTSA…NLTRNVGPVR (68 aa). Positions 136 and 137 each coordinate carbamoyl phosphate. Positions 136 and 137 each coordinate UMP. Lys-166 provides a ligand contact to L-aspartate. 3 residues coordinate carbamoyl phosphate: Arg-187, His-215, and Gln-218. 2 residues coordinate UMP: Arg-187 and His-215. Residues Arg-248 and Arg-310 each contribute to the UMP site. Residues Arg-248 and Arg-310 each contribute to the L-aspartate site. 2 residues coordinate carbamoyl phosphate: Leu-350 and Pro-351.

The protein belongs to the aspartate/ornithine carbamoyltransferase superfamily. ATCase family. As to quaternary structure, homotrimer.

The protein localises to the plastid. It is found in the chloroplast. It catalyses the reaction carbamoyl phosphate + L-aspartate = N-carbamoyl-L-aspartate + phosphate + H(+). It participates in pyrimidine metabolism; UMP biosynthesis via de novo pathway; (S)-dihydroorotate from bicarbonate: step 2/3. Its activity is regulated as follows. Feedback inhibited by UMP. Its function is as follows. Catalyzes the condensation of carbamoyl phosphate and aspartate to form carbamoyl aspartate and inorganic phosphate, the committed step in the de novo pyrimidine nucleotide biosynthesis pathway. The chain is Aspartate carbamoyltransferase, chloroplastic (PYRB) from Arabidopsis thaliana (Mouse-ear cress).